The sequence spans 258 residues: Imidazole glycerol phosphate synthase subunit HisF (258 aa).

Residues D11 and D130 contribute to the active site.

This sequence belongs to the HisA/HisF family. In terms of assembly, heterodimer of HisH and HisF.

Its subcellular location is the cytoplasm. The catalysed reaction is 5-[(5-phospho-1-deoxy-D-ribulos-1-ylimino)methylamino]-1-(5-phospho-beta-D-ribosyl)imidazole-4-carboxamide + L-glutamine = D-erythro-1-(imidazol-4-yl)glycerol 3-phosphate + 5-amino-1-(5-phospho-beta-D-ribosyl)imidazole-4-carboxamide + L-glutamate + H(+). The protein operates within amino-acid biosynthesis; L-histidine biosynthesis; L-histidine from 5-phospho-alpha-D-ribose 1-diphosphate: step 5/9. In terms of biological role, IGPS catalyzes the conversion of PRFAR and glutamine to IGP, AICAR and glutamate. The HisF subunit catalyzes the cyclization activity that produces IGP and AICAR from PRFAR using the ammonia provided by the HisH subunit. The sequence is that of Imidazole glycerol phosphate synthase subunit HisF from Stenotrophomonas maltophilia (strain K279a).